The primary structure comprises 309 residues: Probable lipid kinase YegS-like (309 aa).

The 134-residue stretch at Met-1 to Gly-134 folds into the DAGKc domain. ATP is bound by residues Thr-39, Gly-65–Ala-71, and Thr-96. Positions 219, 222, and 224 each coordinate Mg(2+). The active-site Proton acceptor is Glu-280.

The protein belongs to the diacylglycerol/lipid kinase family. YegS lipid kinase subfamily. Mg(2+) serves as cofactor. Requires Ca(2+) as cofactor.

It is found in the cytoplasm. In terms of biological role, probably phosphorylates lipids; the in vivo substrate is unknown. This Stenotrophomonas maltophilia (strain K279a) protein is Probable lipid kinase YegS-like.